A 165-amino-acid chain; its full sequence is UPF0303 protein Rleg2_2653 (165 aa).

It belongs to the UPF0303 family.

The protein is UPF0303 protein Rleg2_2653 of Rhizobium leguminosarum bv. trifolii (strain WSM2304).